Reading from the N-terminus, the 171-residue chain is GTP-dependent dephospho-CoA kinase (171 aa).

Residues aspartate 49, valine 51, aspartate 68, and glutamate 122 each coordinate GTP.

Belongs to the GTP-dependent DPCK family.

The catalysed reaction is 3'-dephospho-CoA + GTP = GDP + CoA + H(+). The protein operates within cofactor biosynthesis; coenzyme A biosynthesis. Functionally, catalyzes the GTP-dependent phosphorylation of the 3'-hydroxyl group of dephosphocoenzyme A to form coenzyme A (CoA). This chain is GTP-dependent dephospho-CoA kinase, found in Hyperthermus butylicus (strain DSM 5456 / JCM 9403 / PLM1-5).